The following is a 265-amino-acid chain: tRNA (guanine-N(7)-)-methyltransferase (265 aa).

A disordered region spans residues 1 to 40; it reads MIHDDDPNAPGAPHDDDATAAPASATRAAPAAGDDDDANP. The segment covering 19–32 has biased composition (low complexity); the sequence is TAAPASATRAAPAA. Positions 95, 120, 147, and 170 each coordinate S-adenosyl-L-methionine. The active site involves D170. Substrate-binding positions include K174, D206, and 241-244; that span reads TKFE.

The protein belongs to the class I-like SAM-binding methyltransferase superfamily. TrmB family.

The catalysed reaction is guanosine(46) in tRNA + S-adenosyl-L-methionine = N(7)-methylguanosine(46) in tRNA + S-adenosyl-L-homocysteine. It participates in tRNA modification; N(7)-methylguanine-tRNA biosynthesis. Catalyzes the formation of N(7)-methylguanine at position 46 (m7G46) in tRNA. This Burkholderia pseudomallei (strain 1710b) protein is tRNA (guanine-N(7)-)-methyltransferase.